Reading from the N-terminus, the 116-residue chain is Ribosome-binding factor A (116 aa).

Belongs to the RbfA family. As to quaternary structure, monomer. Binds 30S ribosomal subunits, but not 50S ribosomal subunits or 70S ribosomes.

The protein localises to the cytoplasm. In terms of biological role, one of several proteins that assist in the late maturation steps of the functional core of the 30S ribosomal subunit. Associates with free 30S ribosomal subunits (but not with 30S subunits that are part of 70S ribosomes or polysomes). Required for efficient processing of 16S rRNA. May interact with the 5'-terminal helix region of 16S rRNA. In Enterococcus faecalis (strain ATCC 700802 / V583), this protein is Ribosome-binding factor A.